Here is a 720-residue protein sequence, read N- to C-terminus: MQCVKLPVSVTVEINVLLLAVTALALFTRLYGIHFPKAVVFDEVYYGQFLSLYMKQVFFIDESGPPFGHMILALGAYLGGFDGNFVWNRIGAEYPGNVPVWSLRLIPALAGSFCVPLAYLVVVELGYSHFSALGACALLLMENSLIVQSRFMLLESVLIFFLLLAVLSYLRFHKARNSFFKWFWLVICGVSCAFGIGVKYMGMFTYFLLLSLAAVHTWQLIGDQTLSHGKVMFQVLVRFLALVVLPVIMYLGFFYIHLTLLYRSGPHDQMMSSAFQASLEGGLARITQGQPLDVAFGSQVTLRTVSGKPVPCWLHSHKANYPIRYENGRGSSHQQQVTCYPFKDVNNWWIIKDPGRQSLVVSSPPKPVRHGDIIQLLHGMTTRYLNTHDVAAPMSPHSQEVSGYIDFNVSMPAQNLWRVDIVNRESEKEIWKTILSEVRLVHVNTSAVLKLSGASLPEWGFKQLEVVGDKIYKGYQQTGMWNVEEHRYGRSQEPKERELELKSPTHSDVNKNLTFMAKFLELQWKMLTVKNEESEHKYSSSPLEWITMDTNIAYWLHPSSNAQIHFIGNIVTWTTGNITLVVYCLLFLTYLLRRRRKVEDIPQDSWEQLVLAGVVCLGGWAVNYLPFFLMEKTLFLYHYLPALTFKILQIPIVTEHLYIHVLRSSAQQKAFGGVILAVLCSVYMSYHSLSPLTYGQPALTSDKLAELRWRESWDILLRKR.

Transmembrane regions (helical) follow at residues 7-27 (PVSV…LALF), 67-87 (FGHM…NFVW), 105-125 (LIPA…VVEL), 127-147 (YSHF…SLIV), 150-170 (RFML…LSYL), 178-198 (SFFK…GIGV), 201-221 (MGMF…WQLI), and 239-259 (FLAL…IHLT). MIR domains are found at residues 291 to 354 (PLDV…IKDP), 365 to 422 (PKPV…VDIV), and 426 to 486 (SEKE…VEEH). The next 4 membrane-spanning stretches (helical) occupy residues 570-590 (IVTW…FLTY), 609-629 (LVLA…PFFL), 633-653 (TLFL…IPIV), and 670-690 (AFGG…HSLS).

This sequence belongs to the glycosyltransferase 39 family. As to expression, widely expressed. Has particularly strong expression in testis, ovary, brain, liver and heart.

Its subcellular location is the endoplasmic reticulum membrane. The enzyme catalyses a di-trans,poly-cis-dolichyl beta-D-mannosyl phosphate + L-seryl-[protein] = 3-O-(alpha-D-mannosyl)-L-seryl-[protein] + a di-trans,poly-cis-dolichyl phosphate + H(+). It carries out the reaction a di-trans,poly-cis-dolichyl beta-D-mannosyl phosphate + L-threonyl-[protein] = 3-O-(alpha-D-mannosyl)-L-threonyl-[protein] + a di-trans,poly-cis-dolichyl phosphate + H(+). It functions in the pathway protein modification; protein glycosylation. In terms of biological role, transfers mannosyl residues to the hydroxyl group of serine or threonine residues. Coexpression of both POMT1 and POMT2 is necessary for enzyme activity, expression of either POMT1 or POMT2 alone is insufficient. This chain is Protein O-mannosyl-transferase 1, found in Danio rerio (Zebrafish).